The chain runs to 260 residues: Type III pantothenate kinase (260 aa).

Residue 6-13 participates in ATP binding; it reads DAGNTRIK. Substrate-binding positions include Tyr100 and 107 to 110; that span reads GADR. Asp109 serves as the catalytic Proton acceptor. Thr133 is a binding site for ATP. Thr186 contacts substrate.

Belongs to the type III pantothenate kinase family. In terms of assembly, homodimer. The cofactor is NH4(+). K(+) is required as a cofactor.

It localises to the cytoplasm. It catalyses the reaction (R)-pantothenate + ATP = (R)-4'-phosphopantothenate + ADP + H(+). It functions in the pathway cofactor biosynthesis; coenzyme A biosynthesis; CoA from (R)-pantothenate: step 1/5. Its function is as follows. Catalyzes the phosphorylation of pantothenate (Pan), the first step in CoA biosynthesis. This is Type III pantothenate kinase from Janthinobacterium sp. (strain Marseille) (Minibacterium massiliensis).